The chain runs to 309 residues: 2-dehydro-3-deoxygluconokinase (309 aa).

Substrate is bound by residues 28–32, tyrosine 88, 102–104, and arginine 170; these read GDTLN and YWR. Residues 168–170, 228–233, and 261–264 each bind ATP; these read NYR, KRGADS, and AAGD. Aspartate 264 provides a ligand contact to substrate. The Proton acceptor role is filled by aspartate 264.

The protein belongs to the carbohydrate kinase pfkB family.

It carries out the reaction 2-dehydro-3-deoxy-D-gluconate + ATP = 2-dehydro-3-deoxy-6-phospho-D-gluconate + ADP + H(+). Its pathway is carbohydrate acid metabolism; 2-dehydro-3-deoxy-D-gluconate degradation; D-glyceraldehyde 3-phosphate and pyruvate from 2-dehydro-3-deoxy-D-gluconate: step 1/2. Functionally, catalyzes the phosphorylation of 2-keto-3-deoxygluconate (KDG) to produce 2-keto-3-deoxy-6-phosphogluconate (KDPG). This Escherichia coli (strain ATCC 9637 / CCM 2024 / DSM 1116 / LMG 11080 / NBRC 13500 / NCIMB 8666 / NRRL B-766 / W) protein is 2-dehydro-3-deoxygluconokinase (kdgK).